Here is a 334-residue protein sequence, read N- to C-terminus: L-lactate dehydrogenase B chain (334 aa).

A2 carries the post-translational modification N-acetylalanine. Residue K7 is modified to N6-acetyllysine. NAD(+)-binding positions include 30–58 and R100; that span reads GQVG…LEDK. A Phosphoserine modification is found at S44. Residue K58 is modified to N6-acetyllysine. Residue R107 coordinates substrate. K119 is subject to N6-acetyllysine. An NAD(+)-binding site is contributed by N139. Substrate is bound by residues N139 and R170. The active-site Proton acceptor is H194. Phosphotyrosine is present on Y240. T249 is a binding site for substrate. K329 carries the post-translational modification N6-acetyllysine.

The protein belongs to the LDH/MDH superfamily. LDH family. Homotetramer. Interacts with PTEN upstream reading frame protein MP31; the interaction leads to inhibition of mitochondrial lactate dehydrogenase activity, preventing conversion of lactate to pyruvate in mitochondria.

Its subcellular location is the cytoplasm. The protein localises to the mitochondrion inner membrane. It catalyses the reaction (S)-lactate + NAD(+) = pyruvate + NADH + H(+). It functions in the pathway fermentation; pyruvate fermentation to lactate; (S)-lactate from pyruvate: step 1/1. In terms of biological role, interconverts simultaneously and stereospecifically pyruvate and lactate with concomitant interconversion of NADH and NAD(+). The sequence is that of L-lactate dehydrogenase B chain (LDHB) from Sus scrofa (Pig).